The following is a 131-amino-acid chain: Small ribosomal subunit protein uS8 (131 aa).

Belongs to the universal ribosomal protein uS8 family. In terms of assembly, part of the 30S ribosomal subunit. Contacts proteins S5 and S12.

Its function is as follows. One of the primary rRNA binding proteins, it binds directly to 16S rRNA central domain where it helps coordinate assembly of the platform of the 30S subunit. This is Small ribosomal subunit protein uS8 from Finegoldia magna (strain ATCC 29328 / DSM 20472 / WAL 2508) (Peptostreptococcus magnus).